Reading from the N-terminus, the 1191-residue chain is Homeodomain-interacting protein kinase 3 (1191 aa).

A Glycyl lysine isopeptide (Lys-Gly) (interchain with G-Cter in SUMO2) cross-link involves residue Lys27. Residues 197–525 (YEVLDFLGRG…PIETLNHPFV (329 aa)) form the Protein kinase domain. Residues 203-211 (LGRGTFGQV) and Lys226 each bind ATP. Asp322 acts as the Proton acceptor in catalysis. Phosphotyrosine is present on Tyr359. The tract at residues 766-920 (QNRSNSLQNT…NSMSDDEQES (155 aa)) is interaction with AR. Positions 774–867 (NTNVPHSAFI…SPRPSLRECK (94 aa)) are interaction with FAS. The tract at residues 801–828 (TQDNHTSEGEARTCHEASVRQDSSVSDK) is disordered. Positions 802 to 828 (QDNHTSEGEARTCHEASVRQDSSVSDK) are enriched in basic and acidic residues. Positions 846 to 856 (ITISSDTDDEE) are interaction with UBL1. The span at 888-905 (SSPDSTLSTSSSGQSSPS) shows a compositional bias: low complexity. Disordered regions lie at residues 888-960 (SSPD…TCAG) and 993-1022 (TCQP…KPTS). Over residues 1008–1022 (NQPSASAARQQKPTS) the composition is skewed to polar residues.

It belongs to the protein kinase superfamily. CMGC Ser/Thr protein kinase family. HIPK subfamily. As to quaternary structure, interacts with Nkx1-2. Interacts with FAS and DAXX. Probably part of a complex consisting of HIPK3, FAS and FADD. Interacts with UBL1/SUMO-1. Interacts with and stabilizes ligand-bound androgen receptor (AR). Post-translationally, autophosphorylated. Autophosphorylation is not required for catalytic activity. May be sumoylated.

It is found in the nucleus. The enzyme catalyses L-seryl-[protein] + ATP = O-phospho-L-seryl-[protein] + ADP + H(+). It catalyses the reaction L-threonyl-[protein] + ATP = O-phospho-L-threonyl-[protein] + ADP + H(+). Seems to negatively regulate apoptosis by promoting FADD phosphorylation. Enhances androgen receptor-mediated transcription. May act as a transcriptional corepressor for NK homeodomain transcription factors. In Rattus norvegicus (Rat), this protein is Homeodomain-interacting protein kinase 3 (Hipk3).